A 139-amino-acid polypeptide reads, in one-letter code: MKKTALLNAPLSQVIATLGHTDSLTICDAGLPIPKQIERVDLALSAGVPSFLQTFHAVVTEMFVERAIIAEEIKEKNPKILTALLNSLAQLEQQQGNQIEVQYVSHDMFKTYTHASKAIVRSGECSPYANIILYSGVPF.

Histidine 20 (proton donor) is an active-site residue. Substrate contacts are provided by residues aspartate 28, histidine 106, and 128–130 (YAN).

Belongs to the RbsD / FucU family. RbsD subfamily. In terms of assembly, homodecamer.

It is found in the cytoplasm. The catalysed reaction is beta-D-ribopyranose = beta-D-ribofuranose. The protein operates within carbohydrate metabolism; D-ribose degradation; D-ribose 5-phosphate from beta-D-ribopyranose: step 1/2. Its function is as follows. Catalyzes the interconversion of beta-pyran and beta-furan forms of D-ribose. The chain is D-ribose pyranase from Pasteurella multocida (strain Pm70).